Consider the following 271-residue polypeptide: 3-methyl-2-oxobutanoate hydroxymethyltransferase (271 aa).

Mg(2+) is bound by residues Asp51 and Asp90. Residues 51-52 (DS), Asp90, and Lys118 each bind 3-methyl-2-oxobutanoate. A Mg(2+)-binding site is contributed by Glu120. The Proton acceptor role is filled by Glu186.

It belongs to the PanB family. In terms of assembly, homodecamer; pentamer of dimers. The cofactor is Mg(2+).

The protein localises to the cytoplasm. It carries out the reaction 3-methyl-2-oxobutanoate + (6R)-5,10-methylene-5,6,7,8-tetrahydrofolate + H2O = 2-dehydropantoate + (6S)-5,6,7,8-tetrahydrofolate. The protein operates within cofactor biosynthesis; (R)-pantothenate biosynthesis; (R)-pantoate from 3-methyl-2-oxobutanoate: step 1/2. Its function is as follows. Catalyzes the reversible reaction in which hydroxymethyl group from 5,10-methylenetetrahydrofolate is transferred onto alpha-ketoisovalerate to form ketopantoate. The sequence is that of 3-methyl-2-oxobutanoate hydroxymethyltransferase from Xanthomonas axonopodis pv. citri (strain 306).